We begin with the raw amino-acid sequence, 123 residues long: Probable histone H2B 3 (123 aa).

The segment at 1–31 (MAPPKPSAKGAKKAAKTVSKPKDGKKRKHAR) is disordered. O-linked (GlcNAc) serine glycosylation is present at serine 110. Lysine 118 is covalently cross-linked (Glycyl lysine isopeptide (Lys-Gly) (interchain with G-Cter in ubiquitin)).

The protein belongs to the histone H2B family. As to quaternary structure, the nucleosome is a histone octamer containing two molecules each of H2A, H2B, H3 and H4 assembled in one H3-H4 heterotetramer and two H2A-H2B heterodimers. The octamer wraps approximately 147 bp of DNA. In terms of processing, monoubiquitination of Lys-118 gives a specific tag for epigenetic transcriptional activation and is also prerequisite for histone H3 'Lys-4' and 'Lys-79' methylation. GlcNAcylation at Ser-110 promotes monoubiquitination of Lys-118. It fluctuates in response to extracellular glucose, and associates with transcribed genes.

The protein localises to the nucleus. The protein resides in the chromosome. In terms of biological role, core component of nucleosome. Nucleosomes wrap and compact DNA into chromatin, limiting DNA accessibility to the cellular machineries which require DNA as a template. Histones thereby play a central role in transcription regulation, DNA repair, DNA replication and chromosomal stability. DNA accessibility is regulated via a complex set of post-translational modifications of histones, also called histone code, and nucleosome remodeling. In Caenorhabditis elegans, this protein is Probable histone H2B 3 (his-41).